Reading from the N-terminus, the 515-residue chain is 2-isopropylmalate synthase (515 aa).

One can recognise a Pyruvate carboxyltransferase domain in the interval 5–268; the sequence is LIIFDTTLRD…DLGIDTTQIV (264 aa). Mn(2+) contacts are provided by Asp-14, His-202, His-204, and Asn-239. Residues 396-515 are regulatory domain; that stretch reads KFVSLAQRSE…NADKLNPQRA (120 aa).

Belongs to the alpha-IPM synthase/homocitrate synthase family. LeuA type 1 subfamily. As to quaternary structure, homodimer. Mn(2+) serves as cofactor.

Its subcellular location is the cytoplasm. The enzyme catalyses 3-methyl-2-oxobutanoate + acetyl-CoA + H2O = (2S)-2-isopropylmalate + CoA + H(+). Its pathway is amino-acid biosynthesis; L-leucine biosynthesis; L-leucine from 3-methyl-2-oxobutanoate: step 1/4. In terms of biological role, catalyzes the condensation of the acetyl group of acetyl-CoA with 3-methyl-2-oxobutanoate (2-ketoisovalerate) to form 3-carboxy-3-hydroxy-4-methylpentanoate (2-isopropylmalate). In Burkholderia pseudomallei (strain 1106a), this protein is 2-isopropylmalate synthase.